A 679-amino-acid chain; its full sequence is Enzymatic polyprotein (679 aa).

Residues 40–130 (LHCFVDTGAS…LYEPFIQFTD (91 aa)) are protease. Residue Asp45 is part of the active site. The region spanning 272-452 (LKVIKPSKSP…KKINFLGLEI (181 aa)) is the Reverse transcriptase domain.

Belongs to the caulimoviridae enzymatic polyprotein family.

It catalyses the reaction DNA(n) + a 2'-deoxyribonucleoside 5'-triphosphate = DNA(n+1) + diphosphate. In terms of biological role, encodes for at least two polypeptides: protease (PR) and reverse transcriptase (RT). The protease processes the polyprotein in cis. Reverse transcriptase is multifunctional enzyme that converts the viral RNA genome into dsDNA in viral cytoplasmic capsids. This enzyme displays a DNA polymerase activity that can copy either DNA or RNA templates, and a ribonuclease H (RNase H) activity that cleaves the RNA strand of RNA-DNA heteroduplexes in a partially processive 3'- to 5'-endonucleasic mode. Neo-synthesized pregenomic RNA (pgRNA) are encapsidated, and reverse-transcribed inside the nucleocapsid. Partial (+)DNA is synthesized from the (-)DNA template and generates the relaxed circular DNA (RC-DNA) genome. After budding and infection, the RC-DNA migrates in the nucleus, and is converted into a plasmid-like covalently closed circular DNA (cccDNA). The sequence is that of Enzymatic polyprotein from Arabidopsis thaliana (Mouse-ear cress).